The chain runs to 3926 residues: Protein bassoon (3926 aa).

Residues 1–161 (MGNEVSLEGG…PTSPYSVPQI (161 aa)) are disordered. The N-myristoyl glycine moiety is linked to residue G2. Composition is skewed to pro residues over residues 15–30 (PLPP…PGPG) and 58–72 (PPVP…PGPG). The interval 23–32 (PGPGPGPGPG) is 5 X 2 AA tandem repeats of P-G. The 7 X 2 AA tandem repeats of P-G stretch occupies residues 61–74 (PGPGPGPGPGPGPG). 2 stretches are compositionally biased toward polar residues: residues 90–105 (RAAS…TTPG) and 130–157 (QVDS…SPYS). At S145 the chain carries Phosphoserine. R148 is subject to Omega-N-methylarginine. 2 consecutive C4-type zinc fingers follow at residues 170–193 (CPIC…CTQC) and 198–220 (CNQC…CLNC). 2 disordered regions span residues 231 to 343 (TTAP…EQTQ) and 366 to 459 (SVQP…KTMP). Over residues 233–243 (APRSKSQQQLH) the composition is skewed to polar residues. S244 and S248 each carry phosphoserine. Residues 366–377 (SVQPEADTQGQP) are compositionally biased toward polar residues. 2 C4-type zinc fingers span residues 465 to 488 (CPLC…CTTC) and 493 to 515 (CNLC…CLNC). 2 disordered regions span residues 524-927 (SLGE…LQGG) and 940-1248 (GSYG…AEGT). The segment covering 552–569 (PLKQKGPQGLGQPSGPLP) has biased composition (low complexity). Tandem repeats lie at residues 571–577 (KASPLST), 578–584 (KASPLPS), and 585–591 (KASPQAK). Positions 571 to 591 (KASPLSTKASPLPSKASPQAK) are 3 X 7 AA tandem repeats of K-A-S-P-[LQ]-[APS]-[KST]. The segment covering 619 to 631 (MPKPPPETTPTPA) has biased composition (pro residues). Over residues 671–680 (QDASRSPQSL) the composition is skewed to polar residues. Positions 681-698 (SDTGYSSDGISSSQSEIT) are enriched in low complexity. A compositionally biased stretch (acidic residues) spans 771-787 (FDSDEELEDILEEDEDS). Positions 788-797 (AEWRRRREQQ) are enriched in basic and acidic residues. The span at 851–862 (SAEEDNLEEDDT) shows a compositional bias: acidic residues. Residue R867 is modified to Omega-N-methylarginine. S970 carries the post-translational modification Phosphoserine. Low complexity predominate over residues 984-1001 (PASTPSYTSGTSPTSLSS). The stretch at 1037-1092 (IEDSSEEEELREEEELLREQEKMREVEQQRIRSTARKTRRDKEELRAQRRRERSKT) forms a coiled coil. Acidic residues predominate over residues 1039 to 1052 (DSSEEEELREEEEL). S1040 and S1041 each carry phosphoserine. Basic and acidic residues predominate over residues 1053-1066 (LREQEKMREVEQQR). A Phosphoserine modification is found at S1090. The residue at position 1092 (T1092) is a Phosphothreonine. S1098 and S1104 each carry phosphoserine. The segment covering 1107-1122 (EELRQAAEMEELHRSS) has biased composition (basic and acidic residues). Composition is skewed to low complexity over residues 1123–1133 (CSEYSPSPSLD) and 1163–1180 (SPTE…SGRP). Positions 1181–1208 (LKSAEEAYEEMMRKAELLQRQQGQAAGA) form a coiled coil. Residues 1182 to 1197 (KSAEEAYEEMMRKAEL) show a composition bias toward basic and acidic residues. Residues 1199–1209 (QRQQGQAAGAR) are compositionally biased toward low complexity. S1226 is subject to Phosphoserine. The stretch at 1276–1294 (RDLAFAEDKKKEKQFLNAE) forms a coiled coil. 2 disordered regions span residues 1298–1547 (MDPM…RLVW) and 1570–1620 (RMVH…RVPS). The segment covering 1322-1332 (SFSTPTSSDSS) has biased composition (low complexity). Residue T1343 is glycosylated (O-linked (GlcNAc) threonine). Over residues 1346 to 1355 (FAKETQDPLK) the composition is skewed to basic and acidic residues. 2 stretches are compositionally biased toward low complexity: residues 1358-1367 (SSPASPSSAS) and 1377-1392 (GPGT…CPAG). T1384 is a glycosylation site (O-linked (GlcNAc) threonine). Over residues 1408-1434 (RSPSPSSTAHSYGHSPTTANYGSQTED) the composition is skewed to polar residues. Low complexity predominate over residues 1466 to 1493 (PSRAYSYFASSSPPLSPSSPSESPTFSP). Phosphoserine is present on residues S1477, S1486, and S1488. Over residues 1570–1598 (RMVHASASTSPLCSPTETQPTTHGYSQTT) the composition is skewed to polar residues. Residues 1606-1616 (PPEPPGPPGFP) show a composition bias toward pro residues. An omega-N-methylarginine mark is found at R1787 and R1791. The residue at position 1801 (R1801) is an Asymmetric dimethylarginine; alternate. R1801 is modified (omega-N-methylarginine; alternate). An Omega-N-methylarginine modification is found at R1813. Residues 1924 to 1978 (PEKSMADAAPPGQSSSPFYGPRDPEPPEPPTYRAQGVVGPGPHEEQRPYPQGLPG) form a disordered region. A phosphoserine mark is found at S1985 and S2041. 2 positions are modified to omega-N-methylarginine: R2046 and R2076. 3 positions are modified to asymmetric dimethylarginine: R2250, R2260, and R2266. The disordered stretch occupies residues 2287–2309 (AAKAPGAGGPSRPEMPVGAAREE). An O-linked (GlcNAc) threonine glycan is attached at T2314. The span at 2324–2341 (GAPAPAPLAGQKPPADAA) shows a compositional bias: low complexity. Disordered stretches follow at residues 2324 to 2370 (GAPA…KQQE) and 2532 to 2568 (PSSA…ACEL). Residues 2351–2476 (RPGFEKEEAS…EEQKQRQKAP (126 aa)) adopt a coiled-coil conformation. Basic and acidic residues predominate over residues 2353 to 2370 (GFEKEEASQEERQRKQQE). A compositionally biased stretch (polar residues) spans 2533–2543 (SSASDMSLQTE). S2570 carries the post-translational modification Phosphoserine. Residues T2587 and T2614 each carry the phosphothreonine modification. Residues 2601 to 2655 (RRRARRSADCSVQTDDEDSAEWEQPVRRRRSRLPRHSDSGSDSKHDATASSSSAA) form a disordered region. The span at 2635–2647 (RHSDSGSDSKHDA) shows a compositional bias: basic and acidic residues. T2691 carries O-linked (GlcNAc) threonine glycosylation. The interval 2721-3268 (EPDGQAQGVA…PGSSGRPGKE (548 aa)) is interaction with DAO. A phosphoserine mark is found at S2802, S2851, and S2857. Residues 2845 to 2865 (TLQRSLSDPKPLSPTAEESAK) are disordered. T2936 is a glycosylation site (O-linked (GlcNAc) threonine). Residues 2939–2981 (SLLRELDRDLRLVEHESTKLRKKQAELDEEEKEIDAKLKYLEL) are a coiled coil. S3013 carries the phosphoserine modification. Residues 3039–3055 (AAAPATPSGPTAFQQPR) show a composition bias toward low complexity. Disordered stretches follow at residues 3039–3375 (AAAP…FSPI), 3424–3551 (GMSS…PRAH), and 3572–3897 (EAYH…SVFS). The span at 3083–3095 (YPGPSTYPAPAFP) shows a compositional bias: pro residues. Low complexity predominate over residues 3165–3176 (ASPVVPMSSAPS). The span at 3205–3228 (SVSQSPAPTYPSDSHYTSLEQNVP) shows a compositional bias: polar residues. A Phosphoserine modification is found at S3291. 3 stretches are compositionally biased toward basic and acidic residues: residues 3321–3333 (GDSD…RVEK), 3363–3375 (QGME…FSPI), and 3465–3477 (GYER…ERLQ). The residue at position 3373 (S3373) is a Phosphoserine. Position 3492 is an omega-N-methylarginine (R3492). Basic and acidic residues-rich tracts occupy residues 3540–3551 (VQEHVKDGPRAH), 3583–3593 (WFDKPRDARSD), 3628–3647 (LWPH…EHRH), and 3657–3681 (HTGE…EARP). The segment covering 3703–3712 (AEYSQPSRAS) has biased composition (polar residues). The segment covering 3741–3807 (PQAQPQLQGR…RLQQQSQPTT (67 aa)) has biased composition (low complexity). R3808 carries the post-translational modification Omega-N-methylarginine. Low complexity-rich tracts occupy residues 3849 to 3860 (AKAPQQGRAPQA) and 3882 to 3892 (GAPAGQPGADG).

As to quaternary structure, interacts with PCLO, ERC2/CAST1, RIMS1 and UNC13A. Interacts with TPRG1L. Interacts with DYNLL1 and DYNLL2; these interactions potentially link PTVs to dynein and myosin V motor complexes. Interacts with ATG5; this interaction is important for the regulation of presynaptic autophagy. Interacts (via C-terminus) with TRIO (via N-terminus). Interacts with CTBP1. Interacts with SIAH1; this interaction negatively regulates SIAH1 E3 ligase activity. Interacts (via coiled region) with DAO; the interaction is direct. In terms of processing, myristoylated. The N-terminal myristoylation is not sufficient for presynaptic localization. As to expression, exclusively expressed in brain.

It localises to the cytoplasm. It is found in the presynaptic active zone. The protein localises to the cytoskeleton. The protein resides in the cytoplasmic vesicle. Its subcellular location is the secretory vesicle. It localises to the synaptic vesicle membrane. Functionally, scaffold protein of the presynaptic cytomatrix at the active zone (CAZ) which is the place in the synapse where neurotransmitter is released. After synthesis, participates in the formation of Golgi-derived membranous organelles termed Piccolo-Bassoon transport vesicles (PTVs) that are transported along axons to sites of nascent synaptic contacts. At the presynaptic active zone, regulates the spatial organization of synaptic vesicle cluster, the protein complexes that execute membrane fusion and compensatory endocytosis. Also functions in processes other than assembly such as the regulation of specific presynaptic protein ubiquitination by interacting with SIAH1 or the regulation of presynaptic autophagy by associating with ATG5. Also mediates synapse to nucleus communication leading to reconfiguration of gene expression by associating with the transcriptional corepressor CTBP1 and by subsequently reducing the size of its pool available for nuclear import. Inhibits the activity of the proportion of DAO enzyme that localizes to the presynaptic active zone, which may modulate synaptic transmission. The sequence is that of Protein bassoon from Homo sapiens (Human).